The sequence spans 922 residues: MAGKLRVHELAKELGVTSKELLATLKEQGEFVKTASSTVQPPVVKKMKKHYGVGEESAKESATTPSPAAKPGPKPAAKAAPKAAAKPGPKPGPKPGPQPVKNTNPVAGAGTRPTSTVKPGEKPAPKPGAKPAPKTAAKPTPKPGAKPGPKPGGAKPGAKPGPKPGGRAPRVANNPFSSGAPAERPAPRPRGGQAGPGDMPRPGSRPGGAKKAGPKPGGAKQGGGRRPSPAMMPSHPNPAQMPSKSDNFGGGRGRGGRHGGPGGPGGPGGPGGPRGGRGGRRGGTAGAFGRPGGAPRKGRKSKRQKRNEYEAMQAPSVVGGVKLPNGKGAKIRLARGASLMDFAEKIKADAAALVQALFNLGEMVTATQSVSDETLMLLGEEMDYKVEVVSPEDEDRELLESFDLQFGEDEGEDEDLAQRPPVVTVMGHVDHGKTRLLDTIRKANVGSGEAGGITQHIGAYQVSVSMEGEDRLVTFLDTPGHEAFTAMRARGAKSTDIAILVVAADDGVMPQTVEAINHAKAADIPVVVAVNKIDKEGAQPDKIRGQLTEYGLIPEEYGGETMFVDISAKQGTNIDQLLESVLLTADASLDLRANPDMDAQGVAIEAHLDRGRGPVATIIVQRGTLRVGDSIVVGDAYGRVRRMIDEHGNDVQEAGPSRPVQVLGLTSVSGAGDNLLVVDEDRTARQIADRRDARRRNALAARSRKRVSLEDLDSVLKETNTLNLILKGDNAGTVEALEDALLKIEVDDEVDLNIIDRGVGAVTETNVNLAAASDAVIIGFNVRAEGKATEVANAEGVDIRYYSIIYKAIEEVEAALKGMLKPIYEEKQIGTAEIRQIFKASSVGLIAGCMVETGKVRRNAQARLVRDGNVVAEKTTIESLRREKDDVTEVSAGYECGMVLSYPDIQVDDIIEVFELVEVPRT.

The segment at 33–310 is disordered; that stretch reads KTASSTVQPP…SKRQKRNEYE (278 aa). A compositionally biased stretch (low complexity) spans 75–87; that stretch reads PAAKAAPKAAAKP. 2 stretches are compositionally biased toward pro residues: residues 88-98 and 140-150; these read GPKPGPKPGPQ and TPKPGAKPGPK. Composition is skewed to low complexity over residues 151–169 and 202–211; these read PGGA…GRAP and PGSRPGGAKK. Gly residues-rich tracts occupy residues 215–225 and 248–292; these read KPGGAKQGGGR and FGGG…GRPG. Basic residues predominate over residues 296 to 305; sequence RKGRKSKRQK. Residues 418–590 enclose the tr-type G domain; sequence QRPPVVTVMG…VLLTADASLD (173 aa). Residues 427–434 are G1; the sequence is GHVDHGKT. Position 427–434 (427–434) interacts with GTP; the sequence is GHVDHGKT. Residues 452–456 are G2; it reads GITQH. Residues 477–480 are G3; sequence DTPG. GTP is bound by residues 477–481 and 531–534; these read DTPGH and NKID. Residues 531–534 form a G4 region; that stretch reads NKID. Residues 567–569 form a G5 region; the sequence is SAK.

This sequence belongs to the TRAFAC class translation factor GTPase superfamily. Classic translation factor GTPase family. IF-2 subfamily.

The protein resides in the cytoplasm. In terms of biological role, one of the essential components for the initiation of protein synthesis. Protects formylmethionyl-tRNA from spontaneous hydrolysis and promotes its binding to the 30S ribosomal subunits. Also involved in the hydrolysis of GTP during the formation of the 70S ribosomal complex. This Corynebacterium jeikeium (strain K411) protein is Translation initiation factor IF-2.